A 325-amino-acid chain; its full sequence is Probable serine/threonine-protein phosphatase 2A activator 1 (325 aa).

It belongs to the PTPA-type PPIase family.

The protein localises to the cytoplasm. It carries out the reaction [protein]-peptidylproline (omega=180) = [protein]-peptidylproline (omega=0). Functionally, PPIases accelerate the folding of proteins. It catalyzes the cis-trans isomerization of proline imidic peptide bonds in oligopeptides. Acts as a regulatory subunit for PP2A-like phosphatases modulating their activity or substrate specificity, probably by inducing a conformational change in the catalytic subunit, a direct target of the PPIase. This Dictyostelium discoideum (Social amoeba) protein is Probable serine/threonine-protein phosphatase 2A activator 1 (ppp2r4A).